Reading from the N-terminus, the 158-residue chain is Dysbindin domain-containing protein 2 (158 aa).

The disordered stretch occupies residues F79 to S158. The segment covering P106–S131 has biased composition (low complexity). A phosphoserine mark is found at S119 and S120. T137 is modified (phosphothreonine). Phosphoserine is present on S142. The span at S142–G151 shows a compositional bias: acidic residues.

Belongs to the dysbindin family. As to quaternary structure, monomer. Interacts with CSNK1D and CSNK1E.

Functionally, may modulate the activity of casein kinase-1. Inhibits CSNK1D autophosphorylation (in vitro). The polypeptide is Dysbindin domain-containing protein 2 (Dbndd2) (Mus musculus (Mouse)).